The primary structure comprises 221 residues: GTP-binding nuclear protein Ran-2 (221 aa).

The region spanning 10–174 (DYPSFKLVIV…LYLARKLAGD (165 aa)) is the Small GTPase Ran-type domain. A GTP-binding site is contributed by 21–28 (DGGTGKTT). The segment at 40 to 48 (KKYEPTIGV) is switch-I. Residues glycine 71, 125 to 128 (NKVD), and 153 to 155 (SAK) each bind GTP. The switch-II stretch occupies residues 71 to 87 (GQEKFGGLRDGYYIHGQ). The segment covering 202–212 (ADLAAAAAQPL) has biased composition (low complexity). The segment at 202-221 (ADLAAAAAQPLPDDDDDAFE) is disordered.

This sequence belongs to the small GTPase superfamily. Ran family. As to quaternary structure, found in a nuclear export complex with RanGTP, exportin and pre-miRNA. Interacts with RanBP1a and RanBP1b. Interacts with PHRIP1. Interacts with KPNB1. Binds to PHIP1.

The protein resides in the nucleus. Its subcellular location is the nucleus envelope. Its function is as follows. GTP-binding protein involved in nucleocytoplasmic transport. Required for the import of protein into the nucleus and also for RNA export. Involved in chromatin condensation and control of cell cycle. The chain is GTP-binding nuclear protein Ran-2 from Arabidopsis thaliana (Mouse-ear cress).